We begin with the raw amino-acid sequence, 78 residues long: UPF0270 protein PC1_3850 (78 aa).

This sequence belongs to the UPF0270 family.

In Pectobacterium carotovorum subsp. carotovorum (strain PC1), this protein is UPF0270 protein PC1_3850.